Reading from the N-terminus, the 740-residue chain is Arf-GAP with coiled-coil, ANK repeat and PH domain-containing protein 1 (740 aa).

The BAR domain occupies 1 to 226 (MTVKLDFEEC…RKELGTQLHN (226 aa)). The required for formation of endosomal tubules when overexpressed with PIP5K1C stretch occupies residues 1 to 382 (MTVKLDFEEC…RGPGQVSGYH (382 aa)). Residues 265–360 (GLVMEGHLFK…WVSAVQSSIA (96 aa)) enclose the PH domain. The Arf-GAP domain occupies 405-527 (GQVAAQVQSV…KFLTKLPEIR (123 aa)). The tract at residues 405–740 (GQVAAQVQSV…SRRSHDLHTL (336 aa)) is required for interaction with GULP1. Residues 420 to 443 (CCDCREPAPEWASINLGVTLCIQC) form a C4-type zinc finger. 3'-nitrotyrosine is present on Y485. A disordered region spans residues 525 to 562 (EIRGRRGGRGPPRGHPPVPPKPPIRPHSGIVRSKSECP). The segment at 525–566 (EIRGRRGGRGPPRGHPPVPPKPPIRPHSGIVRSKSECPSDDM) is prevents interaction with ITGB1 when S-554 is not phosphorylated. Residues 537-549 (RGHPPVPPKPPIR) show a composition bias toward pro residues. ANK repeat units lie at residues 606–635 (GNAT…NVNQ), 639–668 (AGRG…DLGA), and 672–702 (EGRD…EAEA).

As to quaternary structure, banana-shaped homodimer laterally assembling into tetramers, the tetramers further pack helically onto the membrane. Interacts with GTP-bound ARF6. Interacts with third cytoplasmic loop of SLC2A4/GLUT4. Interacts with CLTC. Interacts with GULP1. Forms a complex with GDP-bound ARF6 and GULP1. Interacts with ITGB1; required for ITGB1 recycling.

Its subcellular location is the recycling endosome membrane. GAP activity stimulated by phosphatidylinositol 4,5-bisphosphate (PIP2) and phosphatidic acid. Functionally, GTPase-activating protein (GAP) for ADP ribosylation factor 6 (ARF6) required for clathrin-dependent export of proteins from recycling endosomes to trans-Golgi network and cell surface. Required for regulated export of ITGB1 from recycling endosomes to the cell surface and ITGB1-dependent cell migration. This Mus musculus (Mouse) protein is Arf-GAP with coiled-coil, ANK repeat and PH domain-containing protein 1 (Acap1).